Consider the following 326-residue polypeptide: Probable fructokinase-4 (326 aa).

It belongs to the carbohydrate kinase PfkB family.

The catalysed reaction is D-fructose + ATP = D-fructose 6-phosphate + ADP + H(+). It participates in glycan biosynthesis; starch biosynthesis. Functionally, may play an important role in maintaining the flux of carbon towards starch formation. The polypeptide is Probable fructokinase-4 (Arabidopsis thaliana (Mouse-ear cress)).